The sequence spans 74 residues: Protein A30 homolog (74 aa).

It belongs to the chordopoxvirinae A30 family. As to quaternary structure, interacts with protein G7; the interaction stabilizes both proteins. In terms of processing, phosphorylated by viral F10 kinase.

Functionally, required for the association between the dense viroplasm and the viral membranes to form the mature virion (MV). The sequence is that of Protein A30 homolog from Fowlpox virus (strain NVSL) (FPV).